Consider the following 258-residue polypeptide: UPF0246 protein CKO_03380 (258 aa).

This sequence belongs to the UPF0246 family.

In Citrobacter koseri (strain ATCC BAA-895 / CDC 4225-83 / SGSC4696), this protein is UPF0246 protein CKO_03380.